A 415-amino-acid polypeptide reads, in one-letter code: Fructose-like permease IIC component 1 (415 aa).

Over 1–46 the chain is Cytoplasmic; the sequence is MAIKKRSATVVPGASGAAAAVKNPQASKTSFWGELPQHVMSGISRM. Residues 35 to 410 enclose the PTS EIIC type-2 domain; that stretch reads LPQHVMSGIS…RLMMFRKGKL (376 aa). Residues 47-67 traverse the membrane as a helical segment; it reads VPTLIMGGVILAFSQLIAYSW. Over 68-101 the chain is Periplasmic; that stretch reads LKIPAEIGIMDALNSGKFSGFDLSLLKFAWLSQS. A helical transmembrane segment spans residues 102 to 122; the sequence is FGGVLFGFAIPMFAAFVANSI. Topologically, residues 123–126 are cytoplasmic; that stretch reads GGKL. Residues 127-147 form a helical membrane-spanning segment; the sequence is AFPAGFIGGLMSTQPTQLLNF. Over 148-157 the chain is Periplasmic; that stretch reads DPSTMQWATS. Residues 158–178 form a helical membrane-spanning segment; sequence SPVPSTFIGALIISIVAGYLV. At 179-197 the chain is on the cytoplasmic side; that stretch reads KWMNQKIQLPDFLLAFKTT. A helical membrane pass occupies residues 198-218; that stretch reads FLLPILSAIFVMLAMYYVITP. Residues 219–237 lie on the Periplasmic side of the membrane; it reads FGGWINGGIRTVLTAAGEK. Residues 238 to 258 form a helical membrane-spanning segment; that stretch reads GALMYAMGIAAATAIDLGGPI. Over 259-276 the chain is Cytoplasmic; that stretch reads NKAAGFVAFSFTTDHVLP. Residues 277–297 traverse the membrane as a helical segment; that stretch reads VTARSIAIVIPPIGLGLATII. The Periplasmic segment spans residues 298 to 318; the sequence is DRRLTGKRLFNAQLYPQGKTA. A helical transmembrane segment spans residues 319 to 339; sequence MFLAFMGISEGAIPFALESPI. At 340 to 341 the chain is on the cytoplasmic side; it reads TA. Residues 342–362 form a helical membrane-spanning segment; the sequence is IPSYMVGAIVGSTAAVWLGAV. At 363–378 the chain is on the periplasmic side; that stretch reads QWFPESAIWAWPLVTN. A helical membrane pass occupies residues 379-399; that stretch reads LGVYMAGIALGAVITALMVVF. Residues 400–415 are Cytoplasmic-facing; sequence LRLMMFRKGKLLIDSL.

The protein resides in the cell inner membrane. The phosphoenolpyruvate-dependent sugar phosphotransferase system (PTS), a major carbohydrate active -transport system, catalyzes the phosphorylation of incoming sugar substrates concomitant with their translocation across the cell membrane. The chain is Fructose-like permease IIC component 1 (fryC) from Escherichia coli (strain K12).